A 377-amino-acid polypeptide reads, in one-letter code: Succinyl-diaminopimelate desuccinylase 2 (377 aa).

Residue H62 coordinates Zn(2+). D64 is an active-site residue. D95 is a binding site for Zn(2+). E129 (proton acceptor) is an active-site residue. Residues E130, E158, and H350 each coordinate Zn(2+).

This sequence belongs to the peptidase M20A family. DapE subfamily. Homodimer. The cofactor is Zn(2+). Co(2+) serves as cofactor.

The catalysed reaction is N-succinyl-(2S,6S)-2,6-diaminopimelate + H2O = (2S,6S)-2,6-diaminopimelate + succinate. It participates in amino-acid biosynthesis; L-lysine biosynthesis via DAP pathway; LL-2,6-diaminopimelate from (S)-tetrahydrodipicolinate (succinylase route): step 3/3. In terms of biological role, catalyzes the hydrolysis of N-succinyl-L,L-diaminopimelic acid (SDAP), forming succinate and LL-2,6-diaminopimelate (DAP), an intermediate involved in the bacterial biosynthesis of lysine and meso-diaminopimelic acid, an essential component of bacterial cell walls. In Shewanella loihica (strain ATCC BAA-1088 / PV-4), this protein is Succinyl-diaminopimelate desuccinylase 2.